The primary structure comprises 147 residues: Large ribosomal subunit protein bL9 (147 aa).

This sequence belongs to the bacterial ribosomal protein bL9 family.

Functionally, binds to the 23S rRNA. The protein is Large ribosomal subunit protein bL9 of Shouchella clausii (strain KSM-K16) (Alkalihalobacillus clausii).